The chain runs to 122 residues: Large ribosomal subunit protein uL14 (122 aa).

The protein belongs to the universal ribosomal protein uL14 family. In terms of assembly, part of the 50S ribosomal subunit. Forms a cluster with proteins L3 and L19. In the 70S ribosome, L14 and L19 interact and together make contacts with the 16S rRNA in bridges B5 and B8.

In terms of biological role, binds to 23S rRNA. Forms part of two intersubunit bridges in the 70S ribosome. In Bartonella quintana (strain Toulouse) (Rochalimaea quintana), this protein is Large ribosomal subunit protein uL14.